The primary structure comprises 389 residues: Probable acyl-CoA dehydrogenase fadE25 (389 aa).

It belongs to the acyl-CoA dehydrogenase family. FAD is required as a cofactor.

The enzyme catalyses a 2,3-saturated acyl-CoA + A = a 2,3-dehydroacyl-CoA + AH2. In Mycobacterium bovis (strain ATCC BAA-935 / AF2122/97), this protein is Probable acyl-CoA dehydrogenase fadE25 (fadE25).